The following is a 172-amino-acid chain: Crossover junction endodeoxyribonuclease RuvC (172 aa).

Catalysis depends on residues Asp12, Glu71, and Asp143. Mg(2+) contacts are provided by Asp12, Glu71, and Asp143.

Belongs to the RuvC family. As to quaternary structure, homodimer which binds Holliday junction (HJ) DNA. The HJ becomes 2-fold symmetrical on binding to RuvC with unstacked arms; it has a different conformation from HJ DNA in complex with RuvA. In the full resolvosome a probable DNA-RuvA(4)-RuvB(12)-RuvC(2) complex forms which resolves the HJ. It depends on Mg(2+) as a cofactor.

Its subcellular location is the cytoplasm. It catalyses the reaction Endonucleolytic cleavage at a junction such as a reciprocal single-stranded crossover between two homologous DNA duplexes (Holliday junction).. The RuvA-RuvB-RuvC complex processes Holliday junction (HJ) DNA during genetic recombination and DNA repair. Endonuclease that resolves HJ intermediates. Cleaves cruciform DNA by making single-stranded nicks across the HJ at symmetrical positions within the homologous arms, yielding a 5'-phosphate and a 3'-hydroxyl group; requires a central core of homology in the junction. The consensus cleavage sequence is 5'-(A/T)TT(C/G)-3'. Cleavage occurs on the 3'-side of the TT dinucleotide at the point of strand exchange. HJ branch migration catalyzed by RuvA-RuvB allows RuvC to scan DNA until it finds its consensus sequence, where it cleaves and resolves the cruciform DNA. The sequence is that of Crossover junction endodeoxyribonuclease RuvC from Coxiella burnetii (strain CbuG_Q212) (Coxiella burnetii (strain Q212)).